The primary structure comprises 885 residues: Translation initiation factor IF-2 (885 aa).

Disordered stretches follow at residues 55–150 and 269–300; these read IPDK…ADVT and NTIN…EAVT. The span at 65–146 shows a compositional bias: basic and acidic residues; it reads EPKAKKEPKK…AEAPKPKESL (82 aa). The span at 281-290 shows a compositional bias: basic residues; that stretch reads RRARKKHKKP. The 170-residue stretch at 384 to 553 folds into the tr-type G domain; it reads PRAPVITIMG…LLQADLLELK (170 aa). The segment at 393 to 400 is G1; sequence GHVDHGKT. GTP is bound at residue 393 to 400; that stretch reads GHVDHGKT. A G2 region spans residues 418–422; the sequence is GITQH. The segment at 439–442 is G3; the sequence is DTPG. Residues 439–443 and 493–496 each bind GTP; these read DTPGH and NKMD. The interval 493 to 496 is G4; the sequence is NKMD. The tract at residues 529–531 is G5; the sequence is SAK.

The protein belongs to the TRAFAC class translation factor GTPase superfamily. Classic translation factor GTPase family. IF-2 subfamily.

Its subcellular location is the cytoplasm. Functionally, one of the essential components for the initiation of protein synthesis. Protects formylmethionyl-tRNA from spontaneous hydrolysis and promotes its binding to the 30S ribosomal subunits. Also involved in the hydrolysis of GTP during the formation of the 70S ribosomal complex. The sequence is that of Translation initiation factor IF-2 from Campylobacter concisus (strain 13826).